Here is a 177-residue protein sequence, read N- to C-terminus: Chorismate pyruvate-lyase (177 aa).

The substrate site is built by Met36, Arg78, Leu116, and Glu157.

This sequence belongs to the UbiC family. In terms of assembly, monomer.

Its subcellular location is the cytoplasm. It carries out the reaction chorismate = 4-hydroxybenzoate + pyruvate. The protein operates within cofactor biosynthesis; ubiquinone biosynthesis. In terms of biological role, removes the pyruvyl group from chorismate, with concomitant aromatization of the ring, to provide 4-hydroxybenzoate (4HB) for the ubiquinone pathway. The protein is Chorismate pyruvate-lyase of Pectobacterium atrosepticum (strain SCRI 1043 / ATCC BAA-672) (Erwinia carotovora subsp. atroseptica).